Here is a 127-residue protein sequence, read N- to C-terminus: Calcitonin gene-related peptide 2 (127 aa).

An N-terminal signal peptide occupies residues 1–25 (MGFRKFSPFLALSILVLYQAGSLQA). Positions 26–79 (APFRSALESSPDPATLSKEDARLLLAALVQDYVQMKASELKQEQETQGSSSAAQ) are excised as a propeptide. Residues cysteine 83 and cysteine 88 are joined by a disulfide bond. The residue at position 118 (phenylalanine 118) is a Phenylalanine amide. A propeptide spanning residues 124-127 (DLQA) is cleaved from the precursor.

The protein belongs to the calcitonin family. In terms of tissue distribution, expressed in spinal cord, pituitary and thalamus.

Its subcellular location is the secreted. Functionally, CALCB/CGRP2 is a peptide hormone that induces vasodilation mediated by the CALCRL-RAMP1 receptor complex. Dilates a variety of vessels including the coronary, cerebral and systemic vasculature. Its abundance in the CNS also points toward a neurotransmitter or neuromodulator role. This Homo sapiens (Human) protein is Calcitonin gene-related peptide 2.